Reading from the N-terminus, the 240-residue chain is RNA-binding protein pno1 (240 aa).

Residues 1–15 (MEAENIRADAFEPAK) are compositionally biased toward basic and acidic residues. Positions 1-61 (MEAENIRADA…APPKAKRARS (61 aa)) are disordered. Residues 164–213 (QSRAIGRLAGKGGRTKFTIENVTKTRIVLADSKIHILGSYQNIQLARRAV) form the KH domain.

Belongs to the PNO1 family.

Its subcellular location is the nucleus. It is found in the nucleolus. The polypeptide is RNA-binding protein pno1 (l(1)G0004) (Drosophila melanogaster (Fruit fly)).